Reading from the N-terminus, the 224-residue chain is UPF0758 protein Csal_2972 (224 aa).

The MPN domain maps to 102–224; that stretch reads ALTSPTLVRR…VVSFAERGWL (123 aa). Zn(2+)-binding residues include His-173, His-175, and Asp-186. The JAMM motif motif lies at 173–186; the sequence is HNHPSGVAEPSDAD.

It belongs to the UPF0758 family.

This chain is UPF0758 protein Csal_2972, found in Chromohalobacter salexigens (strain ATCC BAA-138 / DSM 3043 / CIP 106854 / NCIMB 13768 / 1H11).